Here is a 129-residue protein sequence, read N- to C-terminus: Mitochondrial pyruvate carrier 2 (129 aa).

The Mitochondrial matrix portion of the chain corresponds to 2 to 22 (STSSVRFAFRRFWQSETGPKT). The helical transmembrane segment at 23–39 (VHFWAPTLKWGLVFAGF) threads the bilayer. Topologically, residues 40-54 (SDMKRPVEKISGAQN) are mitochondrial intermembrane. Residues 55-71 (LSLLSTALIWTRWSFVI) form a helical membrane-spanning segment. Residues 72–74 (KPR) lie on the Mitochondrial matrix side of the membrane. A helical membrane pass occupies residues 75–91 (NILLASVNSFLCLTAGY). Residues 92-129 (QLGRIANYRIRNGDSISQLCSYILSGADESKKEITTGR) lie on the Mitochondrial intermembrane side of the membrane.

The protein belongs to the mitochondrial pyruvate carrier (MPC) (TC 2.A.105) family. In terms of assembly, the functional 150 kDa pyruvate import complex is a heteromer of MPC1 and either MPC2 or MPC3.

It localises to the mitochondrion. The protein resides in the mitochondrion inner membrane. The catalysed reaction is pyruvate(out) + H(+)(out) = pyruvate(in) + H(+)(in). In terms of biological role, mediates the uptake of pyruvate into mitochondria. The sequence is that of Mitochondrial pyruvate carrier 2 from Saccharomyces cerevisiae (strain ATCC 204508 / S288c) (Baker's yeast).